We begin with the raw amino-acid sequence, 327 residues long: Flap endonuclease 1 (327 aa).

Residues 1-100 are N-domain; sequence MGNADLRQLA…DEIADRREQR (100 aa). Mg(2+) contacts are provided by Asp28, Asp82, Glu154, Glu156, Asp176, Asp178, and Asp226. An I-domain region spans residues 118 to 247; that stretch reads EAARLDARTQ…TALDAIGEHG (130 aa). Residues 319 to 327 form an interaction with PCNA region; it reads AQTGLDRWT.

The protein belongs to the XPG/RAD2 endonuclease family. FEN1 subfamily. Interacts with PCNA. PCNA stimulates the nuclease activity without altering cleavage specificity. It depends on Mg(2+) as a cofactor.

Structure-specific nuclease with 5'-flap endonuclease and 5'-3' exonuclease activities involved in DNA replication and repair. During DNA replication, cleaves the 5'-overhanging flap structure that is generated by displacement synthesis when DNA polymerase encounters the 5'-end of a downstream Okazaki fragment. Binds the unpaired 3'-DNA end and kinks the DNA to facilitate 5' cleavage specificity. Cleaves one nucleotide into the double-stranded DNA from the junction in flap DNA, leaving a nick for ligation. Also involved in the base excision repair (BER) pathway. Acts as a genome stabilization factor that prevents flaps from equilibrating into structures that lead to duplications and deletions. Also possesses 5'-3' exonuclease activity on nicked or gapped double-stranded DNA. In Halobacterium salinarum (strain ATCC 29341 / DSM 671 / R1), this protein is Flap endonuclease 1.